We begin with the raw amino-acid sequence, 123 residues long: Large ribosomal subunit protein bL12 (123 aa).

The protein belongs to the bacterial ribosomal protein bL12 family. In terms of assembly, homodimer. Part of the ribosomal stalk of the 50S ribosomal subunit. Forms a multimeric L10(L12)X complex, where L10 forms an elongated spine to which 2 to 4 L12 dimers bind in a sequential fashion. Binds GTP-bound translation factors.

Forms part of the ribosomal stalk which helps the ribosome interact with GTP-bound translation factors. Is thus essential for accurate translation. The polypeptide is Large ribosomal subunit protein bL12 (Aliarcobacter butzleri (strain RM4018) (Arcobacter butzleri)).